The primary structure comprises 162 residues: Shikimate kinase (162 aa).

10–15 lines the ATP pocket; it reads GAGKST. Residue Ser14 coordinates Mg(2+). Substrate contacts are provided by Asp28, Arg52, and Gly73. ATP is bound at residue Arg113. Arg129 is a substrate binding site.

It belongs to the shikimate kinase family. Monomer. Mg(2+) is required as a cofactor.

The protein resides in the cytoplasm. It catalyses the reaction shikimate + ATP = 3-phosphoshikimate + ADP + H(+). Its pathway is metabolic intermediate biosynthesis; chorismate biosynthesis; chorismate from D-erythrose 4-phosphate and phosphoenolpyruvate: step 5/7. Functionally, catalyzes the specific phosphorylation of the 3-hydroxyl group of shikimic acid using ATP as a cosubstrate. The chain is Shikimate kinase from Lactococcus lactis subsp. cremoris (strain MG1363).